Here is a 301-residue protein sequence, read N- to C-terminus: tRNA pseudouridine synthase B (301 aa).

Residue D38 is the Nucleophile of the active site.

This sequence belongs to the pseudouridine synthase TruB family. Type 1 subfamily.

It carries out the reaction uridine(55) in tRNA = pseudouridine(55) in tRNA. Its function is as follows. Responsible for synthesis of pseudouridine from uracil-55 in the psi GC loop of transfer RNAs. This chain is tRNA pseudouridine synthase B, found in Ehrlichia canis (strain Jake).